The chain runs to 132 residues: Small ribosomal subunit protein uS8 (132 aa).

Belongs to the universal ribosomal protein uS8 family. As to quaternary structure, part of the 30S ribosomal subunit. Contacts proteins S5 and S12.

Functionally, one of the primary rRNA binding proteins, it binds directly to 16S rRNA central domain where it helps coordinate assembly of the platform of the 30S subunit. This is Small ribosomal subunit protein uS8 from Oceanobacillus iheyensis (strain DSM 14371 / CIP 107618 / JCM 11309 / KCTC 3954 / HTE831).